The primary structure comprises 336 residues: UDP-N-acetylglucosamine--N-acetylmuramyl-(pentapeptide) pyrophosphoryl-undecaprenol N-acetylglucosamine transferase (336 aa).

UDP-N-acetyl-alpha-D-glucosamine is bound by residues 10–12 (TGG), Asn124, Arg157, Ser179, and Gln277.

Belongs to the glycosyltransferase 28 family. MurG subfamily.

The protein resides in the cell inner membrane. It carries out the reaction di-trans,octa-cis-undecaprenyl diphospho-N-acetyl-alpha-D-muramoyl-L-alanyl-D-glutamyl-meso-2,6-diaminopimeloyl-D-alanyl-D-alanine + UDP-N-acetyl-alpha-D-glucosamine = di-trans,octa-cis-undecaprenyl diphospho-[N-acetyl-alpha-D-glucosaminyl-(1-&gt;4)]-N-acetyl-alpha-D-muramoyl-L-alanyl-D-glutamyl-meso-2,6-diaminopimeloyl-D-alanyl-D-alanine + UDP + H(+). Its pathway is cell wall biogenesis; peptidoglycan biosynthesis. In terms of biological role, cell wall formation. Catalyzes the transfer of a GlcNAc subunit on undecaprenyl-pyrophosphoryl-MurNAc-pentapeptide (lipid intermediate I) to form undecaprenyl-pyrophosphoryl-MurNAc-(pentapeptide)GlcNAc (lipid intermediate II). This chain is UDP-N-acetylglucosamine--N-acetylmuramyl-(pentapeptide) pyrophosphoryl-undecaprenol N-acetylglucosamine transferase, found in Wolinella succinogenes (strain ATCC 29543 / DSM 1740 / CCUG 13145 / JCM 31913 / LMG 7466 / NCTC 11488 / FDC 602W) (Vibrio succinogenes).